The primary structure comprises 768 residues: Protein STRUBBELIG (768 aa).

An N-terminal signal peptide occupies residues 1–24; it reads MSFTRWEVFFGLSVLALTMPFSAG. Over 25–341 the chain is Extracellular; that stretch reads VTNLRDVSAI…GSGKFWSTQR (317 aa). A disulfide bridge connects residues cysteine 57 and cysteine 66. Residue asparagine 70 is glycosylated (N-linked (GlcNAc...) asparagine). LRR repeat units follow at residues 94-115, 116-139, 140-162, 164-186, 188-210, and 211-231; these read SIQV…ALPS, SIRN…SFLS, DLSE…FQQL, KLTK…MGDL, SLKI…EDLF, and LTDL…NLLK. Residue asparagine 119 is glycosylated (N-linked (GlcNAc...) asparagine). The disordered stretch occupies residues 241 to 334; sequence PFNTSIITPP…ISPPSGSGSG (94 aa). N-linked (GlcNAc...) asparagine glycosylation is present at asparagine 243. Composition is skewed to pro residues over residues 248-283 and 291-301; these read TPPP…PFAP and QHPPPSPPLVW. Residues 315–334 are compositionally biased toward polar residues; sequence NSVSGQPTLQISPPSGSGSG. A helical transmembrane segment spans residues 342 to 362; it reads IILVVSSVAIIVLVSGLCVTL. Residues 363–768 lie on the Cytoplasmic side of the membrane; that stretch reads WRCCRSKIYN…EIVQDLQHMI (406 aa). The disordered stretch occupies residues 385-477; it reads PYFNKPPSQP…RAAHFPPGLN (93 aa). Positions 439-464 are enriched in polar residues; it reads SYYNKDVNTPQKPLQQPPRQFQSNDT. A Protein kinase domain is found at 497 to 768; the sequence is FSEENIIGEG…EIVQDLQHMI (272 aa). ATP-binding positions include 503 to 511 and lysine 525; that span reads IGEGSIGNV.

This sequence belongs to the protein kinase superfamily. Ser/Thr protein kinase family. Interacts (via intra-cellular domain) with AN; this interaction is not required for correct subcellular localization and recycling of SUB. Binds to QKY and POQ at the plasma membrane. Binds to QKY at plasmodesmata (PD) in root epidermal cells to promote tissue morphogenesis. In terms of tissue distribution, expressed in leaves, stems, inflorescences, flower buds and developing root epidermis.

It localises to the cell membrane. It is found in the cell junction. The protein localises to the plasmodesma. With respect to regulation, regulated at the post-transcriptional level. In terms of biological role, regulates the expression of transcription factors that define the cell fates. Acts in a non-cell-autonomous fashion, functions in a radial inside-out signaling process, and mediates cell morphogenesis and cell fate across clonally distinct cell layers in floral primordia, developing ovules, and root meristems. Seems to be required for the regulation of cell shape and the orientation of the mitotic division plane. Involved in root hair specification, in the formation of the outer integument and the shape of organs such as carpels and petals and is necessary for the shape and height of the stem. Non-functional SUB proteins are retained in the endoplasmic reticulum and degraded by endoplasmic reticulum-associated degradation (ERAD). Collaboratively with QKY and POQ, regulates cell growth anisotropy during gynoecium development, thus linking together cell-cell communication and cellular growth. Together with QKY, links RLK-dependent signal transduction and intercellular communication mediated by plasmodesmata (PD) to regulate tissue morphogenesis. The polypeptide is Protein STRUBBELIG (Arabidopsis thaliana (Mouse-ear cress)).